We begin with the raw amino-acid sequence, 313 residues long: MKRENQSSVSEFLLLDLPIWPEQQAVFFTLFLGMYLITVLGNLLIILLIRLDSHLHTPMFFFLSHLALTDISLSSVTVPKMLLSMQTQDQSILYAGCVTQMYFFIFFTDLDNFLLTSMAYDRYVAICHPLRYTTIMKEGLCNLLVTVSWILSCTNALSHTLLLAQLSFCADNTIPHFFCDLVALLKLSCSDISLNELVIFTVGQAVITLPLICILISYGHIGVTILKAPSTKGIFKALSTCGSHLSVVSLYYGTIIGLYFLPSSSASSDKDVIASVMYTVITPLLNPFIYSLRNRDIKGALERLFNRATVLSQ.

Residues 1 to 25 (MKRENQSSVSEFLLLDLPIWPEQQA) lie on the Extracellular side of the membrane. A glycan (N-linked (GlcNAc...) asparagine) is linked at Asn-5. Residues 26–49 (VFFTLFLGMYLITVLGNLLIILLI) form a helical membrane-spanning segment. The Cytoplasmic segment spans residues 50–57 (RLDSHLHT). Residues 58 to 79 (PMFFFLSHLALTDISLSSVTVP) form a helical membrane-spanning segment. Over 80-100 (KMLLSMQTQDQSILYAGCVTQ) the chain is Extracellular. Cys-97 and Cys-189 form a disulfide bridge. A helical membrane pass occupies residues 101-120 (MYFFIFFTDLDNFLLTSMAY). The Cytoplasmic segment spans residues 121–139 (DRYVAICHPLRYTTIMKEG). The helical transmembrane segment at 140–158 (LCNLLVTVSWILSCTNALS) threads the bilayer. Residues 159–195 (HTLLLAQLSFCADNTIPHFFCDLVALLKLSCSDISLN) are Extracellular-facing. The chain crosses the membrane as a helical span at residues 196-219 (ELVIFTVGQAVITLPLICILISYG). At 220–236 (HIGVTILKAPSTKGIFK) the chain is on the cytoplasmic side. The chain crosses the membrane as a helical span at residues 237 to 259 (ALSTCGSHLSVVSLYYGTIIGLY). Residues 260-272 (FLPSSSASSDKDV) are Extracellular-facing. A helical membrane pass occupies residues 273 to 292 (IASVMYTVITPLLNPFIYSL). The Cytoplasmic portion of the chain corresponds to 293 to 313 (RNRDIKGALERLFNRATVLSQ).

The protein belongs to the G-protein coupled receptor 1 family.

Its subcellular location is the cell membrane. Its function is as follows. Odorant receptor. This is Olfactory receptor 1J4 (OR1J4) from Homo sapiens (Human).